The primary structure comprises 155 residues: Acyl-CoA-binding domain-containing protein 3 (155 aa).

The ACB domain maps to 3–88 (LQEDFEEYAE…VKQLQEEAAA (86 aa)). An acyl-CoA is bound by residues Lys-15, 30 to 34 (YGLYK), Lys-56, and Tyr-75.

Belongs to the ACBP family. In terms of tissue distribution, highly expressed in leaves. Expressed at low levels in roots and seeds.

Its subcellular location is the cytoplasm. It is found in the cytosol. Its function is as follows. Binds medium- and long-chain acyl-CoA esters with high affinity. Can interact in vitro with linolenoyl-CoA. Binds phosphatidic acid (PA) and phosphatidylcholine (PC) in vitro. May play a role in the biosynthesis of phospholipids. In Oryza sativa subsp. japonica (Rice), this protein is Acyl-CoA-binding domain-containing protein 3.